The primary structure comprises 760 residues: General transcription and DNA repair factor IIH helicase subunit XPD (760 aa).

In terms of domain architecture, Helicase ATP-binding spans 7-283; sequence GLLVYFPYDY…KETDEQRLRE (277 aa). Residue 42–49 coordinates ATP; sequence MPSGTGKT. 4 residues coordinate [4Fe-4S] cluster: C116, C134, C155, and C190. A DEAH box motif is present at residues 234–237; the sequence is DEAH. The interval 438–637 is mediates interaction with MMS19; that stretch reads MDASLAIKPV…TQSRILKARL (200 aa). A Nuclear localization signal motif is present at residues 682-695; that stretch reads KRFARADKRGKLPR.

Belongs to the helicase family. RAD3/XPD subfamily. Component of the 7-subunit TFIIH core complex composed of XPB/ERCC3, XPD/ERCC2, GTF2H1, GTF2H2, GTF2H3, GTF2H4 and GTF2H5, which is active in NER. The core complex associates with the 3-subunit CDK-activating kinase (CAK) module composed of CCNH/cyclin H, CDK7 and MNAT1 to form the 10-subunit holoenzyme (holo-TFIIH) active in transcription. The interaction with GTF2H2 results in the stimulation of the 5'--&gt;3' helicase activity. Component of the MMXD complex, which includes CIAO1, ERCC2, CIAO2B, MMS19 and SLC25A5. Interacts with CIAO1 and CIAO2B; the interaction WITH CIAO2B is direct. Interacts with ATF7IP. Interacts directly with MMS19. Part of TBP-based Pol II pre-initiation complex (PIC), in which Pol II core assembles with general transcription factors and other specific initiation factors including GTF2E1, GTF2E2, GTF2F1, GTF2F2, TCEA1, ERCC2, ERCC3, GTF2H2, GTF2H3, GTF2H4, GTF2H5, GTF2A1, GTF2A2, GTF2B and TBP; this large multi-subunit PIC complex mediates DNA unwinding and targets Pol II core to the transcription start site where the first phosphodiester bond forms. Mg(2+) serves as cofactor. The cofactor is [4Fe-4S] cluster. In terms of processing, ISGylated.

It localises to the nucleus. It is found in the cytoplasm. The protein resides in the cytoskeleton. Its subcellular location is the spindle. It carries out the reaction Couples ATP hydrolysis with the unwinding of duplex DNA at the replication fork by translocating in the 5'-3' direction. This creates two antiparallel DNA single strands (ssDNA). The leading ssDNA polymer is the template for DNA polymerase III holoenzyme which synthesizes a continuous strand.. It catalyses the reaction ATP + H2O = ADP + phosphate + H(+). ATP-dependent 5'-3' DNA helicase, component of the general transcription and DNA repair factor IIH (TFIIH) core complex, which is involved in general and transcription-coupled nucleotide excision repair (NER) of damaged DNA and, when complexed to CDK-activating kinase (CAK), involved in transcription by RNA polymerase II. In NER, TFIIH acts by opening DNA around the lesion to allow the excision of the damaged oligonucleotide and its replacement by a new DNA fragment. The ATP-dependent helicase activity of XPD/ERCC2 is required for DNA opening. In transcription, TFIIH has an essential role in transcription initiation. When the pre-initiation complex (PIC) has been established, TFIIH is required for promoter opening and promoter escape. Phosphorylation of the C-terminal tail (CTD) of the largest subunit of RNA polymerase II by the kinase module CAK controls the initiation of transcription. XPD/ERCC2 acts by forming a bridge between CAK and the core-TFIIH complex. Involved in the regulation of vitamin-D receptor activity. As part of the mitotic spindle-associated MMXD complex it plays a role in chromosome segregation. Might have a role in aging process and could play a causative role in the generation of skin cancers. The protein is General transcription and DNA repair factor IIH helicase subunit XPD (ERCC2) of Bos taurus (Bovine).